The primary structure comprises 194 residues: Imidazoleglycerol-phosphate dehydratase (194 aa).

Belongs to the imidazoleglycerol-phosphate dehydratase family.

Its subcellular location is the cytoplasm. The enzyme catalyses D-erythro-1-(imidazol-4-yl)glycerol 3-phosphate = 3-(imidazol-4-yl)-2-oxopropyl phosphate + H2O. It functions in the pathway amino-acid biosynthesis; L-histidine biosynthesis; L-histidine from 5-phospho-alpha-D-ribose 1-diphosphate: step 6/9. The sequence is that of Imidazoleglycerol-phosphate dehydratase from Caldicellulosiruptor bescii (strain ATCC BAA-1888 / DSM 6725 / KCTC 15123 / Z-1320) (Anaerocellum thermophilum).